The sequence spans 233 residues: Putative N-acetylmannosamine-6-phosphate 2-epimerase (233 aa).

This sequence belongs to the NanE family.

It catalyses the reaction an N-acyl-D-glucosamine 6-phosphate = an N-acyl-D-mannosamine 6-phosphate. The protein operates within amino-sugar metabolism; N-acetylneuraminate degradation; D-fructose 6-phosphate from N-acetylneuraminate: step 3/5. Converts N-acetylmannosamine-6-phosphate (ManNAc-6-P) to N-acetylglucosamine-6-phosphate (GlcNAc-6-P). The polypeptide is Putative N-acetylmannosamine-6-phosphate 2-epimerase (Yersinia pseudotuberculosis serotype IB (strain PB1/+)).